The sequence spans 99 residues: Nucleoid-associated protein SPy_1862/M5005_Spy1580 (99 aa).

It belongs to the YbaB/EbfC family. In terms of assembly, homodimer.

Its subcellular location is the cytoplasm. It localises to the nucleoid. Functionally, binds to DNA and alters its conformation. May be involved in regulation of gene expression, nucleoid organization and DNA protection. The protein is Nucleoid-associated protein SPy_1862/M5005_Spy1580 of Streptococcus pyogenes serotype M1.